The primary structure comprises 154 residues: Superoxide dismutase [Cu-Zn] (154 aa).

Residues His47, His49, and His64 each contribute to the Cu cation site. An intrachain disulfide couples Cys58 to Cys147. The Zn(2+) site is built by His64, His72, His81, and Asp84. His121 provides a ligand contact to Cu cation. Arg144 is a substrate binding site.

It belongs to the Cu-Zn superoxide dismutase family. As to quaternary structure, homodimer. Cu cation serves as cofactor. Requires Zn(2+) as cofactor.

It localises to the cytoplasm. The protein localises to the mitochondrion. It is found in the cell membrane. The catalysed reaction is 2 superoxide + 2 H(+) = H2O2 + O2. Functionally, destroys radicals which are normally produced within the cells and which are toxic to biological systems. Destroys radicals produced by host defense mechanisms. The polypeptide is Superoxide dismutase [Cu-Zn] (Cryptococcus neoformans var. grubii serotype A (strain H99 / ATCC 208821 / CBS 10515 / FGSC 9487) (Filobasidiella neoformans var. grubii)).